A 286-amino-acid polypeptide reads, in one-letter code: Polyamine aminopropyltransferase 1 (286 aa).

Residues 1–235 (MSDYQETLYQ…GAMTFAWGST (235 aa)) form the PABS domain. Q30 is an S-methyl-5'-thioadenosine binding site. Spermidine contacts are provided by H61 and D85. Residues E105 and 137 to 138 (DG) each bind S-methyl-5'-thioadenosine. D155 functions as the Proton acceptor in the catalytic mechanism. 155–158 (DSTD) lines the spermidine pocket. Residue P162 participates in S-methyl-5'-thioadenosine binding.

This sequence belongs to the spermidine/spermine synthase family. Homodimer or homotetramer.

The protein resides in the cytoplasm. It carries out the reaction S-adenosyl 3-(methylsulfanyl)propylamine + putrescine = S-methyl-5'-thioadenosine + spermidine + H(+). Its pathway is amine and polyamine biosynthesis; spermidine biosynthesis; spermidine from putrescine: step 1/1. In terms of biological role, catalyzes the irreversible transfer of a propylamine group from the amino donor S-adenosylmethioninamine (decarboxy-AdoMet) to putrescine (1,4-diaminobutane) to yield spermidine. In Pseudomonas aeruginosa (strain ATCC 15692 / DSM 22644 / CIP 104116 / JCM 14847 / LMG 12228 / 1C / PRS 101 / PAO1), this protein is Polyamine aminopropyltransferase 1.